The sequence spans 78 residues: UPF0349 protein GK2958 (78 aa).

It belongs to the UPF0349 family.

This chain is UPF0349 protein GK2958, found in Geobacillus kaustophilus (strain HTA426).